Reading from the N-terminus, the 177-residue chain is Large ribosomal subunit protein uL10 (177 aa).

This sequence belongs to the universal ribosomal protein uL10 family. In terms of assembly, part of the ribosomal stalk of the 50S ribosomal subunit. The N-terminus interacts with L11 and the large rRNA to form the base of the stalk. The C-terminus forms an elongated spine to which L12 dimers bind in a sequential fashion forming a multimeric L10(L12)X complex.

Forms part of the ribosomal stalk, playing a central role in the interaction of the ribosome with GTP-bound translation factors. This is Large ribosomal subunit protein uL10 from Kocuria rhizophila (strain ATCC 9341 / DSM 348 / NBRC 103217 / DC2201).